The following is a 282-amino-acid chain: Bifunctional protein FolD (282 aa).

Residues 167–169 and serine 192 each bind NADP(+); that span reads GRS.

The protein belongs to the tetrahydrofolate dehydrogenase/cyclohydrolase family. Homodimer.

The catalysed reaction is (6R)-5,10-methylene-5,6,7,8-tetrahydrofolate + NADP(+) = (6R)-5,10-methenyltetrahydrofolate + NADPH. The enzyme catalyses (6R)-5,10-methenyltetrahydrofolate + H2O = (6R)-10-formyltetrahydrofolate + H(+). The protein operates within one-carbon metabolism; tetrahydrofolate interconversion. Its function is as follows. Catalyzes the oxidation of 5,10-methylenetetrahydrofolate to 5,10-methenyltetrahydrofolate and then the hydrolysis of 5,10-methenyltetrahydrofolate to 10-formyltetrahydrofolate. This Acidobacterium capsulatum (strain ATCC 51196 / DSM 11244 / BCRC 80197 / JCM 7670 / NBRC 15755 / NCIMB 13165 / 161) protein is Bifunctional protein FolD.